Consider the following 374-residue polypeptide: Ribosomal RNA large subunit methyltransferase G (374 aa).

It belongs to the methyltransferase superfamily. RlmG family.

It is found in the cytoplasm. The enzyme catalyses guanosine(1835) in 23S rRNA + S-adenosyl-L-methionine = N(2)-methylguanosine(1835) in 23S rRNA + S-adenosyl-L-homocysteine + H(+). Specifically methylates the guanine in position 1835 (m2G1835) of 23S rRNA. The protein is Ribosomal RNA large subunit methyltransferase G of Pseudomonas savastanoi pv. phaseolicola (strain 1448A / Race 6) (Pseudomonas syringae pv. phaseolicola (strain 1448A / Race 6)).